The chain runs to 524 residues: Tyrosine-protein kinase HCK (524 aa).

The interval 1–72 (MGGRSSCEDP…NNSNSMPPGF (72 aa)) is disordered. A lipid anchor (N-myristoyl glycine) is attached at glycine 2. Glycine 3 is lipidated: S-palmitoyl cysteine. Residues 29-38 (FLRDGSKASK) are compositionally biased toward basic and acidic residues. A Phosphotyrosine; by autocatalysis modification is found at tyrosine 50. Residues 54 to 68 (PTSSSKLGPNNSNSM) show a composition bias toward polar residues. The SH3 domain occupies 76–136 (SEDTIVVALY…PSNYVARVNS (61 aa)). Positions 142–239 (WFFKGISRKD…GLCQKLSVPC (98 aa)) constitute an SH2 domain. Threonine 200 is subject to Phosphothreonine. Position 207 is a phosphotyrosine (tyrosine 207). The 254-residue stretch at 260–513 (LQMEKKLGAG…YIQSVLDDFY (254 aa)) folds into the Protein kinase domain. Residues 266 to 274 (LGAGQFGEV) and lysine 288 each bind ATP. Catalysis depends on aspartate 379, which acts as the Proton acceptor. Tyrosine 409 carries the phosphotyrosine; by autocatalysis modification. Serine 460 carries the post-translational modification Phosphoserine. Tyrosine 520 carries the post-translational modification Phosphotyrosine.

It belongs to the protein kinase superfamily. Tyr protein kinase family. SRC subfamily. As to quaternary structure, interacts with ADAM15. Interacts with FASLG. Interacts with ARRB1 and ARRB2. Interacts with FCGR1A; the interaction may be indirect. Interacts with IL6ST. Interacts (via SH3 domain) with ELMO1. Interacts (via SH3 domain) with TP73. Interacts with YAP1. Interacts with ABL1 and ITGB1, and thereby recruits ABL1 to activated ITGB1. Interacts (via SH2 domain) with FLT3 (tyrosine phosphorylated). Interacts with CBL. Interacts with VAV1, WAS and RAPGEF1. Interacts (via SH3 domain) with WDCP. Post-translationally, phosphorylated on several tyrosine residues. Autophosphorylated. Becomes rapidly phosphorylated upon activation of the immunoglobulin receptors FCGR1A and FCGR2A. Phosphorylation at Tyr-409 increases kinase activity. Phosphorylation at Tyr-520 inhibits kinase activity. Kinase activity is not required for phosphorylation at Tyr-520, suggesting that this site may be a target of other kinases. In terms of processing, ubiquitinated by CBL, leading to its degradation via the proteasome. Isoform 2 palmitoylation at position 2 requires prior myristoylation. Palmitoylation at position 3 is required for caveolar localization of isoform 2. Expressed predominantly in cells of the myeloid and B-lymphoid lineages.

The protein localises to the cytoplasmic vesicle. Its subcellular location is the secretory vesicle. It is found in the cytoplasm. It localises to the cytosol. The protein resides in the membrane. The protein localises to the caveola. Its subcellular location is the lysosome. It is found in the cell projection. It localises to the podosome membrane. The protein resides in the cell membrane. The protein localises to the cell junction. Its subcellular location is the focal adhesion. It is found in the cytoskeleton. It localises to the golgi apparatus. The protein resides in the nucleus. It carries out the reaction L-tyrosyl-[protein] + ATP = O-phospho-L-tyrosyl-[protein] + ADP + H(+). Its activity is regulated as follows. Subject to autoinhibition, mediated by intramolecular interactions involving the SH2 and SH3 domains. Kinase activity is also regulated by phosphorylation at regulatory tyrosine residues. Phosphorylation at Tyr-409 is required for optimal activity. Phosphorylation at Tyr-520 inhibits kinase activity. Inhibited by PP1. In terms of biological role, non-receptor tyrosine-protein kinase found in hematopoietic cells that transmits signals from cell surface receptors and plays an important role in the regulation of innate immune responses, including neutrophil, monocyte, macrophage and mast cell functions, phagocytosis, cell survival and proliferation, cell adhesion and migration. Acts downstream of receptors that bind the Fc region of immunoglobulins, such as FCGR1A and FCGR2A, but also CSF3R, PLAUR, the receptors for IFNG, IL2, IL6 and IL8, and integrins, such as ITGB1 and ITGB2. During the phagocytic process, mediates mobilization of secretory lysosomes, degranulation, and activation of NADPH oxidase to bring about the respiratory burst. Plays a role in the release of inflammatory molecules. Promotes reorganization of the actin cytoskeleton and actin polymerization, formation of podosomes and cell protrusions. Inhibits TP73-mediated transcription activation and TP73-mediated apoptosis. Phosphorylates CBL in response to activation of immunoglobulin gamma Fc region receptors. Phosphorylates ADAM15, BCR, ELMO1, FCGR2A, GAB1, GAB2, RAPGEF1, STAT5B, TP73, VAV1 and WAS. This Mus musculus (Mouse) protein is Tyrosine-protein kinase HCK (Hck).